The following is a 307-amino-acid chain: Ribonuclease HII (307 aa).

The region spanning 44–235 (EPVAGVDEAG…VRRAGGRMEL (192 aa)) is the RNase H type-2 domain. Residues D50, E51, and D144 each coordinate a divalent metal cation. The segment at 241-307 (ADSDDSPGFA…SRPAELLEIP (67 aa)) is disordered. The segment covering 250–280 (ASGPAEAVPGPAGSAGAASAAARPAAAGPAG) has biased composition (low complexity). Residues 287 to 296 (RAADLRDNGD) show a composition bias toward basic and acidic residues.

This sequence belongs to the RNase HII family. It depends on Mn(2+) as a cofactor. The cofactor is Mg(2+).

The protein localises to the cytoplasm. It carries out the reaction Endonucleolytic cleavage to 5'-phosphomonoester.. In terms of biological role, endonuclease that specifically degrades the RNA of RNA-DNA hybrids. The chain is Ribonuclease HII from Acidothermus cellulolyticus (strain ATCC 43068 / DSM 8971 / 11B).